The primary structure comprises 454 residues: MNLHEKKVLVVGAGRSGLAAVKRLKALGARIVLTDQKELAQLSGISELGLPDGQLVLGHIPQWHEVASEVIVLSPGVSPKLPFIQEGIAQGALIWSEVELALRDHPAFKIGVTGTNGKTTTTTLIGELAKRTGRPTLVAGNIGVALSDQVEDLDGEGIIVAELSSFQLEWVDSLRMNVGILLNVTPDHLDRHGTLDNYLAAKARIFEKQSPSDCAILNWDDARVRALAPHLKARVVFFSPTSLLAEGYGVRGDEVVLAEGGKITPIIARGELQLRGSHNLENIMAAIAAVRELGLSWEEITQGLRDFKGVEHRQEVVGTYEGILFINDSKGTNPDASEKALYAFEEPIVLIAGGKNKGLDFHDFMKTIKKQVKSLVLVGTAAAEMEQAAKDTGIQNYLRAGTFAEAVELAIAEAEPGDVVLLSPACTSWDMFKSYEERGEFFKELVRRHYREPI.

An ATP-binding site is contributed by 114–120; it reads GTNGKTT.

It belongs to the MurCDEF family.

Its subcellular location is the cytoplasm. The enzyme catalyses UDP-N-acetyl-alpha-D-muramoyl-L-alanine + D-glutamate + ATP = UDP-N-acetyl-alpha-D-muramoyl-L-alanyl-D-glutamate + ADP + phosphate + H(+). The protein operates within cell wall biogenesis; peptidoglycan biosynthesis. Functionally, cell wall formation. Catalyzes the addition of glutamate to the nucleotide precursor UDP-N-acetylmuramoyl-L-alanine (UMA). The sequence is that of UDP-N-acetylmuramoylalanine--D-glutamate ligase from Desulfitobacterium hafniense (strain Y51).